Reading from the N-terminus, the 940-residue chain is Phosphoenolpyruvate carboxylase (940 aa).

Catalysis depends on residues histidine 138 and lysine 603.

Belongs to the PEPCase type 1 family. Requires Mg(2+) as cofactor.

The enzyme catalyses oxaloacetate + phosphate = phosphoenolpyruvate + hydrogencarbonate. Functionally, forms oxaloacetate, a four-carbon dicarboxylic acid source for the tricarboxylic acid cycle. The sequence is that of Phosphoenolpyruvate carboxylase from Streptococcus thermophilus (strain ATCC BAA-250 / LMG 18311).